Reading from the N-terminus, the 295-residue chain is Tissue factor (295 aa).

The signal sequence occupies residues 1–32 (METPAWPRVPRPETAVARTLLLGWVFAQVAGA). Over 33-251 (SGTTNTVAAY…MGQEKGEFRE (219 aa)) the chain is Extracellular. Short sequence motifs (WKS motif) lie at residues 46–48 (WKS) and 77–79 (WKS). Cys81 and Cys89 are oxidised to a cystine. N-linked (GlcNAc...) asparagine glycans are attached at residues Asn156 and Asn169. The WKS motif motif lies at 190–192 (WKS). Residues Cys218 and Cys241 are joined by a disulfide bond. Residues 252–274 (IFYIIGAVVFVVIILVIILAISL) form a helical membrane-spanning segment. Topologically, residues 275–295 (HKCRKAGVGQSWKENSPLNVS) are cytoplasmic. Residue Cys277 is the site of S-palmitoyl cysteine attachment.

This sequence belongs to the tissue factor family. As to quaternary structure, interacts with HSPE; the interaction, inhibited by heparin, promotes the generation of activated factor X and activates coagulation in the presence of activated factor VII. Lung, placenta and pancreas.

Its subcellular location is the membrane. The protein localises to the secreted. Its function is as follows. Initiates blood coagulation by forming a complex with circulating factor VII or VIIa. The [TF:VIIa] complex activates factors IX or X by specific limited proteolysis. TF plays a role in normal hemostasis by initiating the cell-surface assembly and propagation of the coagulation protease cascade. This is Tissue factor (F3) from Homo sapiens (Human).